A 163-amino-acid polypeptide reads, in one-letter code: GPI-anchored protein LLG2 (163 aa).

The N-terminal stretch at 1–23 (MEISPYCLLSLLPIFLLSGFSLS) is a signal peptide. N52 is a glycosylation site (N-linked (GlcNAc...) asparagine). S135 is lipidated: GPI-anchor amidated serine. A propeptide spans 136–163 (DSIPRASTTASLAVLSTFLVLCLLFLSS) (removed in mature form).

In terms of tissue distribution, expressed in pollen, pollen tubes, sporophytic pistil tissues, in the early stages of female gametophyte development, and in unfertilized, mature ovules.

The protein resides in the cell membrane. This Arabidopsis thaliana (Mouse-ear cress) protein is GPI-anchored protein LLG2.